The primary structure comprises 85 residues: UPF0386 protein VF_0869 (85 aa).

The protein belongs to the UPF0386 family.

The chain is UPF0386 protein VF_0869 from Aliivibrio fischeri (strain ATCC 700601 / ES114) (Vibrio fischeri).